The primary structure comprises 360 residues: Decorin (360 aa).

The N-terminal stretch at 1–16 (MKATIIFLLVAQVSWA) is a signal peptide. Residues 17-30 (GPFQQKGLFDFMLE) constitute a propeptide that is removed on maturation. O-linked (Xyl...) (glycosaminoglycan) serine glycosylation occurs at Ser34. Cystine bridges form between Cys55–Cys61 and Cys59–Cys68. LRR repeat units lie at residues 74–94 (EKVP…NNKI), 95–118 (TEIK…NNKI), 119–142 (SKIS…KNQL), 143–163 (KELP…ENEI), 164–187 (TKVR…TNPL), 188–213 (KSSG…DTNI), 214–234 (TTIP…GNKI), 235–258 (TKVD…FNSI), 259–282 (SAVD…NNKL), 283–305 (VKVP…NNNI), 306–335 (SAIG…SNPV), and 336–360 (QYWE…GNYK). The N-linked (GlcNAc...) asparagine glycan is linked to Asn212. N-linked (GlcNAc...) asparagine glycosylation is found at Asn263 and Asn304. An intrachain disulfide couples Cys314 to Cys347.

The protein belongs to the small leucine-rich proteoglycan (SLRP) family. SLRP class I subfamily. Binds to type I and type II collagen, fibronectin and TGF-beta. Forms a ternary complex with MFAP2 and ELN. Interacts with DPT. In terms of processing, the attached glycosaminoglycan chain can be either chondroitin 4-sulfate, chondroitin 6-sulfate or dermatan sulfate, depending upon the tissue of origin.

The protein localises to the secreted. The protein resides in the extracellular space. It localises to the extracellular matrix. Its function is as follows. May affect the rate of fibrils formation. The sequence is that of Decorin (DCN) from Bos taurus (Bovine).